The sequence spans 504 residues: D-alanine--D-alanyl carrier protein ligase (504 aa).

152-153 (TS) contributes to the ATP binding site. Residue Asp197 participates in D-alanine binding. 292–297 (NTYGPT) contacts ATP. Residue Val301 participates in D-alanine binding. ATP is bound by residues Asp383, 394 to 397 (YNGR), and Lys492. Lys492 provides a ligand contact to D-alanine.

Belongs to the ATP-dependent AMP-binding enzyme family. DltA subfamily.

It localises to the cytoplasm. It carries out the reaction holo-[D-alanyl-carrier protein] + D-alanine + ATP = D-alanyl-[D-alanyl-carrier protein] + AMP + diphosphate. It participates in cell wall biogenesis; lipoteichoic acid biosynthesis. In terms of biological role, catalyzes the first step in the D-alanylation of lipoteichoic acid (LTA), the activation of D-alanine and its transfer onto the D-alanyl carrier protein (Dcp) DltC. In an ATP-dependent two-step reaction, forms a high energy D-alanyl-AMP intermediate, followed by transfer of the D-alanyl residue as a thiol ester to the phosphopantheinyl prosthetic group of the Dcp. D-alanylation of LTA plays an important role in modulating the properties of the cell wall in Gram-positive bacteria, influencing the net charge of the cell wall. This is D-alanine--D-alanyl carrier protein ligase from Bacillus thuringiensis (strain Al Hakam).